The primary structure comprises 182 residues: Putative manganese efflux pump MntP (182 aa).

Transmembrane regions (helical) follow at residues 7-27, 38-58, 71-91, 106-126, 131-151, and 159-179; these read IISI…VSLG, IAYI…AGML, TSFA…FSAF, LWII…GLGI, IFVT…LGML, and FLGV…GIFI.

The protein belongs to the MntP (TC 9.B.29) family.

The protein resides in the cell membrane. Probably functions as a manganese efflux pump. In Oceanobacillus iheyensis (strain DSM 14371 / CIP 107618 / JCM 11309 / KCTC 3954 / HTE831), this protein is Putative manganese efflux pump MntP.